The primary structure comprises 255 residues: F-box/SPRY domain-containing protein 1 (255 aa).

Positions 3–51 (DRVAALCNYNVLEVVFSYLDLNDLGRCSQVCKSWFHFLNDENSDVWRFH) constitute an F-box domain. In terms of domain architecture, B30.2/SPRY spans 61-253 (TKSELLSPVP…VSMVYCGTPL (193 aa)).

The protein belongs to the FBXO45/Fsn family. In terms of assembly, component of an E3 ubiquitin ligase complex composed of hiw and Fsn.

Its subcellular location is the synapse. The protein operates within protein modification; protein ubiquitination. In terms of biological role, required in the presynaptic motoneuron to down-regulate the levels of wnd and restrain synaptic terminal growth at the neuromuscular junction (NMJ). The sequence is that of F-box/SPRY domain-containing protein 1 from Drosophila persimilis (Fruit fly).